The chain runs to 436 residues: 3-ketoacyl-CoA thiolase (436 aa).

The active-site Acyl-thioester intermediate is Cys99. Catalysis depends on proton acceptor residues His392 and Cys422.

It belongs to the thiolase-like superfamily. Thiolase family. In terms of assembly, heterotetramer of two alpha chains (FadJ) and two beta chains (FadI).

Its subcellular location is the cytoplasm. The enzyme catalyses an acyl-CoA + acetyl-CoA = a 3-oxoacyl-CoA + CoA. Its pathway is lipid metabolism; fatty acid beta-oxidation. Catalyzes the final step of fatty acid oxidation in which acetyl-CoA is released and the CoA ester of a fatty acid two carbons shorter is formed. This Escherichia coli O157:H7 protein is 3-ketoacyl-CoA thiolase.